The chain runs to 92 residues: Small ribosomal subunit protein uS19c (92 aa).

The protein belongs to the universal ribosomal protein uS19 family.

The protein resides in the plastid. It localises to the chloroplast. In terms of biological role, protein S19 forms a complex with S13 that binds strongly to the 16S ribosomal RNA. The chain is Small ribosomal subunit protein uS19c from Ostreococcus tauri.